We begin with the raw amino-acid sequence, 147 residues long: Auxin-responsive protein SAUR41 (147 aa).

Belongs to the ARG7 family. In terms of tissue distribution, specifically expressed in the quiescent center and cortex or endodermis initials of root stem niches. Expressed in vascular tissues from hypocotyls, petioles and cotyledons.

The protein resides in the cytoplasm. In terms of biological role, plays a role in the regulation of cell expansion, root meristem patterning and auxin transport. The sequence is that of Auxin-responsive protein SAUR41 from Arabidopsis thaliana (Mouse-ear cress).